A 280-amino-acid chain; its full sequence is Bifunctional protein FolD (280 aa).

Residues 158 to 160 (GES), Ile-183, and Ile-222 contribute to the NADP(+) site.

It belongs to the tetrahydrofolate dehydrogenase/cyclohydrolase family. Homodimer.

It catalyses the reaction (6R)-5,10-methylene-5,6,7,8-tetrahydrofolate + NADP(+) = (6R)-5,10-methenyltetrahydrofolate + NADPH. The enzyme catalyses (6R)-5,10-methenyltetrahydrofolate + H2O = (6R)-10-formyltetrahydrofolate + H(+). It participates in one-carbon metabolism; tetrahydrofolate interconversion. In terms of biological role, catalyzes the oxidation of 5,10-methylenetetrahydrofolate to 5,10-methenyltetrahydrofolate and then the hydrolysis of 5,10-methenyltetrahydrofolate to 10-formyltetrahydrofolate. This is Bifunctional protein FolD from Mycoplasma mobile (strain ATCC 43663 / 163K / NCTC 11711) (Mesomycoplasma mobile).